A 344-amino-acid polypeptide reads, in one-letter code: Aurora kinase B (344 aa).

The residue at position 35 (T35) is a Phosphothreonine. S62 is modified (phosphoserine). Position 64 is a phosphothreonine (T64). Residues 77 to 327 (FEIGRPLGKG…LAQVSAHPWV (251 aa)) enclose the Protein kinase domain. Residues 83–91 (LGKGKFGNV) and K106 contribute to the ATP site. D200 acts as the Proton acceptor in catalysis. Residue K215 is modified to N6-acetyllysine. Residue S227 is modified to Phosphoserine. Phosphothreonine; by autocatalysis is present on T232.

It belongs to the protein kinase superfamily. Ser/Thr protein kinase family. Aurora subfamily. As to quaternary structure, component of the chromosomal passenger complex (CPC) composed of at least BIRC5/survivin, CDCA8/borealin, INCENP, AURKB or AURKC; predominantly independent AURKB- and AURKC-containing complexes exist. Associates with RACGAP1 during M phase. Interacts with SPDYC; this interaction may be required for proper localization of active, Thr-232-phosphorylated AURKB form during prometaphase and metaphase. Interacts with p53/TP53. Interacts (via the middle kinase domain) with NOC2L (via the N- and C-terminus domains). Interacts with CDCA1. Interacts with EVI5. Interacts with JTB. Interacts with NDC80. Interacts with PSMA3. Interacts with RNF2/RING1B. Interacts with SEPTIN1. Interacts with SIRT2. Interacts with TACC1. Interacts with TTC28. Post-translationally, the phosphorylation of Thr-232 requires the binding to INCENP and occurs by means of an autophosphorylation mechanism. Thr-232 phosphorylation is indispensable for the AURKB kinase activity. Acetylated at Lys-215 by KAT5 at kinetochores, increasing AURKB activity and promoting accurate chromosome segregation in mitosis. In terms of processing, ubiquitinated by different BCR (BTB-CUL3-RBX1) E3 ubiquitin ligase complexes. Ubiquitinated by the BCR(KLHL9-KLHL13) E3 ubiquitin ligase complex, ubiquitination leads to removal from mitotic chromosomes and is required for cytokinesis. During anaphase, the BCR(KLHL21) E3 ubiquitin ligase complex recruits the CPC complex from chromosomes to the spindle midzone and mediates the ubiquitination of AURKB. Ubiquitination of AURKB by BCR(KLHL21) E3 ubiquitin ligase complex may not lead to its degradation by the proteasome. Deubiquitinated by USP35; inhibiting CDH1-mediated degradation of AURKB.

It localises to the nucleus. The protein resides in the chromosome. Its subcellular location is the centromere. It is found in the kinetochore. The protein localises to the cytoplasm. It localises to the cytoskeleton. The protein resides in the spindle. Its subcellular location is the midbody. The catalysed reaction is L-seryl-[protein] + ATP = O-phospho-L-seryl-[protein] + ADP + H(+). The enzyme catalyses L-threonyl-[protein] + ATP = O-phospho-L-threonyl-[protein] + ADP + H(+). With respect to regulation, activity is greatly increased when AURKB is within the CPC complex. In particular, AURKB-phosphorylated INCENP acts as an activator of AURKB. Positive feedback between HASPIN and AURKB contributes to CPC localization. Its function is as follows. Serine/threonine-protein kinase component of the chromosomal passenger complex (CPC), a complex that acts as a key regulator of mitosis. The CPC complex has essential functions at the centromere in ensuring correct chromosome alignment and segregation and is required for chromatin-induced microtubule stabilization and spindle assembly. Involved in the bipolar attachment of spindle microtubules to kinetochores and is a key regulator for the onset of cytokinesis during mitosis. Required for central/midzone spindle assembly and cleavage furrow formation. Key component of the cytokinesis checkpoint, a process required to delay abscission to prevent both premature resolution of intercellular chromosome bridges and accumulation of DNA damage: phosphorylates CHMP4C, leading to retain abscission-competent VPS4 (VPS4A and/or VPS4B) at the midbody ring until abscission checkpoint signaling is terminated at late cytokinesis. AURKB phosphorylates the CPC complex subunits BIRC5/survivin, CDCA8/borealin and INCENP. Phosphorylation of INCENP leads to increased AURKB activity. Other known AURKB substrates involved in centromeric functions and mitosis are CENPA, DES/desmin, GPAF, KIF2C, NSUN2, RACGAP1, SEPTIN1, VIM/vimentin, HASPIN, and histone H3. A positive feedback loop involving HASPIN and AURKB contributes to localization of CPC to centromeres. Phosphorylation of VIM controls vimentin filament segregation in cytokinetic process, whereas histone H3 is phosphorylated at 'Ser-10' and 'Ser-28' during mitosis (H3S10ph and H3S28ph, respectively). AURKB is also required for kinetochore localization of BUB1 and SGO1. Phosphorylation of p53/TP53 negatively regulates its transcriptional activity. Key regulator of active promoters in resting B- and T-lymphocytes: acts by mediating phosphorylation of H3S28ph at active promoters in resting B-cells, inhibiting RNF2/RING1B-mediated ubiquitination of histone H2A and enhancing binding and activity of the USP16 deubiquitinase at transcribed genes. Acts as an inhibitor of CGAS during mitosis: catalyzes phosphorylation of the N-terminus of CGAS during the G2-M transition, blocking CGAS liquid phase separation and activation, and thereby preventing CGAS-induced autoimmunity. Phosphorylates KRT5 during anaphase and telophase. Phosphorylates ATXN10 which promotes phosphorylation of ATXN10 by PLK1 and may play a role in the regulation of cytokinesis and stimulating the proteasomal degradation of ATXN10. This is Aurora kinase B (AURKB) from Sus scrofa (Pig).